The chain runs to 179 residues: Large ribosomal subunit protein uL6 (179 aa).

Belongs to the universal ribosomal protein uL6 family. Part of the 50S ribosomal subunit.

This protein binds to the 23S rRNA, and is important in its secondary structure. It is located near the subunit interface in the base of the L7/L12 stalk, and near the tRNA binding site of the peptidyltransferase center. The polypeptide is Large ribosomal subunit protein uL6 (Akkermansia muciniphila (strain ATCC BAA-835 / DSM 22959 / JCM 33894 / BCRC 81048 / CCUG 64013 / CIP 107961 / Muc)).